The primary structure comprises 872 residues: Alanine--tRNA ligase (872 aa).

His-567, His-571, Cys-669, and His-673 together coordinate Zn(2+).

This sequence belongs to the class-II aminoacyl-tRNA synthetase family. It depends on Zn(2+) as a cofactor.

It localises to the cytoplasm. The enzyme catalyses tRNA(Ala) + L-alanine + ATP = L-alanyl-tRNA(Ala) + AMP + diphosphate. Catalyzes the attachment of alanine to tRNA(Ala) in a two-step reaction: alanine is first activated by ATP to form Ala-AMP and then transferred to the acceptor end of tRNA(Ala). Also edits incorrectly charged Ser-tRNA(Ala) and Gly-tRNA(Ala) via its editing domain. This Streptococcus suis (strain 98HAH33) protein is Alanine--tRNA ligase.